The sequence spans 135 residues: Protein PsiE homolog (135 aa).

Helical transmembrane passes span 20–40, 54–74, 82–102, and 107–127; these read VGLI…TFHL, YMLI…ALIV, HFPL…LIIV, and PIDT…LYLA.

Belongs to the PsiE family.

It is found in the cell inner membrane. In Yersinia enterocolitica serotype O:8 / biotype 1B (strain NCTC 13174 / 8081), this protein is Protein PsiE homolog.